We begin with the raw amino-acid sequence, 131 residues long: Flagellar assembly factor FliW (131 aa).

The protein belongs to the FliW family. As to quaternary structure, interacts with translational regulator CsrA and flagellin(s).

It localises to the cytoplasm. Its function is as follows. Acts as an anti-CsrA protein, binds CsrA and prevents it from repressing translation of its target genes, one of which is flagellin. Binds to flagellin and participates in the assembly of the flagellum. In Campylobacter lari (strain RM2100 / D67 / ATCC BAA-1060), this protein is Flagellar assembly factor FliW.